A 157-amino-acid chain; its full sequence is Cyclic pyranopterin monophosphate synthase (157 aa).

Substrate-binding positions include 74-76 (MCH) and 110-111 (ME). Asp125 is an active-site residue.

It belongs to the MoaC family. As to quaternary structure, homohexamer; trimer of dimers.

It catalyses the reaction (8S)-3',8-cyclo-7,8-dihydroguanosine 5'-triphosphate = cyclic pyranopterin phosphate + diphosphate. Its pathway is cofactor biosynthesis; molybdopterin biosynthesis. Functionally, catalyzes the conversion of (8S)-3',8-cyclo-7,8-dihydroguanosine 5'-triphosphate to cyclic pyranopterin monophosphate (cPMP). The protein is Cyclic pyranopterin monophosphate synthase of Peptoclostridium acidaminophilum (Eubacterium acidaminophilum).